A 475-amino-acid polypeptide reads, in one-letter code: Bystin (475 aa).

Composition is skewed to basic residues over residues 1–12 and 29–41; these read MGKDVKKVHKLR and KPHKRVGKLRKKK. Disordered stretches follow at residues 1–57 and 106–149; these read MGKD…ESVI and DFID…QFGV. 2 stretches are compositionally biased toward acidic residues: residues 45–54 and 107–119; these read ENDTGIDETE and FIDDDDDDEDADQ.

Belongs to the bystin family.

The protein resides in the nucleus. The protein localises to the nucleolus. In terms of biological role, required for processing of 20S pre-rRNA precursor and biogenesis of 40S ribosomal subunits. This Dictyostelium discoideum (Social amoeba) protein is Bystin (bysl).